A 211-amino-acid polypeptide reads, in one-letter code: Bcl-2 homologous antagonist/killer (211 aa).

Residues 1–28 (MASGQGPGPPRQECGEPALPSASEEQVA) are disordered. Ala2 carries the N-acetylalanine modification. The BH3 signature appears at 74–88 (VGRQLAIIGDDINRR). The BH1 motif lies at 117–136 (SLFESGINWGRVVALLGFGY). Zn(2+)-binding residues include Asp160 and His164. The BH2 motif lies at 169-184 (RWIAQRGGWVAALNLG). A helical membrane pass occupies residues 188–205 (ILNVLVVLGVVLLGQFVV).

Belongs to the Bcl-2 family. In terms of assembly, homodimer. Formation of the homodimer is zinc-dependent. Forms heterodimers with BCL2 and BCL2L1 isoform Bcl-X(L). Forms heterooligomers with BAX. Interacts with BCL2A1. Interacts with RTL10/BOP. Interacts with VDAC1. Interacts with GIMAP3/IAN4 and GIMAP5/IAN5. (Microbial infection) Interacts with vaccinia virus protein F1. As to quaternary structure, (Microbial infection) Interacts with myxoma virus protein M11L. In terms of assembly, (Microbial infection) Interacts with Epstein-Barr virus protein BALF1. (Microbial infection) Interacts with adenovirus protein E1B 19K. As to expression, expressed in a wide variety of tissues, with highest levels in the heart and skeletal muscle.

It localises to the mitochondrion outer membrane. Plays a role in the mitochondrial apoptotic process. Upon arrival of cell death signals, promotes mitochondrial outer membrane (MOM) permeabilization by oligomerizing to form pores within the MOM. This releases apoptogenic factors into the cytosol, including cytochrome c, promoting the activation of caspase 9 which in turn processes and activates the effector caspases. The chain is Bcl-2 homologous antagonist/killer (BAK1) from Homo sapiens (Human).